Here is a 291-residue protein sequence, read N- to C-terminus: Translocon-associated protein subunit alpha (291 aa).

An N-terminal signal peptide occupies residues 1-20 (MRLLPRLLLLLLLVFPATVL). At 21-207 (FRGGPRGSLA…EREDGLDGET (187 aa)) the chain is on the lumenal side. Residues 34–83 (DLTEDEETVEDSIIEDEDDEAEVEEDEPTDLVEDKEEEDVSGEPEASPSA) form a disordered region. A compositionally biased stretch (acidic residues) spans 35–75 (LTEDEETVEDSIIEDEDDEAEVEEDEPTDLVEDKEEEDVSG). Residues Asn-136 and Asn-191 are each glycosylated (N-linked (GlcNAc...) asparagine). The chain crosses the membrane as a helical span at residues 208-228 (IFMYMFLAGLGLLVIVGLHQL). The Cytoplasmic portion of the chain corresponds to 229–291 (LESRKRKRPV…AQKRSVGSDE (63 aa)). Phosphoserine is present on Ser-247. At Thr-260 the chain carries Phosphothreonine. The segment at 263–291 (QIMQSRRDKASPRRLPRKRAQKRSVGSDE) is disordered. Ser-273 bears the Phosphoserine mark. Over residues 274–284 (PRRLPRKRAQK) the composition is skewed to basic residues.

Belongs to the TRAP-alpha family. As to quaternary structure, heterotetramer of TRAP-alpha, TRAP-beta, TRAP-delta and TRAP-gamma. Interacts with palmitoylated calnexin (CALX), the interaction is required for efficient folding of glycosylated proteins. Phosphorylated in its cytoplasmic tail.

It is found in the endoplasmic reticulum membrane. TRAP proteins are part of a complex whose function is to bind calcium to the ER membrane and thereby regulate the retention of ER resident proteins. May be involved in the recycling of the translocation apparatus after completion of the translocation process or may function as a membrane-bound chaperone facilitating folding of translocated proteins. The polypeptide is Translocon-associated protein subunit alpha (SSR1) (Pongo abelii (Sumatran orangutan)).